Consider the following 95-residue polypeptide: Small ribosomal subunit protein bS6 (95 aa).

Belongs to the bacterial ribosomal protein bS6 family.

Its function is as follows. Binds together with bS18 to 16S ribosomal RNA. The protein is Small ribosomal subunit protein bS6 (rpsF) of Halalkalibacterium halodurans (strain ATCC BAA-125 / DSM 18197 / FERM 7344 / JCM 9153 / C-125) (Bacillus halodurans).